The primary structure comprises 315 residues: Glutathione synthetase (315 aa).

The ATP-grasp domain maps to 125–310 (KLFTAWFSDL…ITGMLMDAIE (186 aa)). ATP is bound at residue 151–207 (WEKHSDIILKPLDGMGGASIFRVKEGDPNLGVIAETLTEHGTRYCMAQNYLPAIKDG). 2 residues coordinate Mg(2+): glutamate 281 and asparagine 283.

Belongs to the prokaryotic GSH synthase family. Requires Mg(2+) as cofactor. Mn(2+) is required as a cofactor.

It catalyses the reaction gamma-L-glutamyl-L-cysteine + glycine + ATP = glutathione + ADP + phosphate + H(+). Its pathway is sulfur metabolism; glutathione biosynthesis; glutathione from L-cysteine and L-glutamate: step 2/2. The sequence is that of Glutathione synthetase from Escherichia coli O157:H7.